A 1050-amino-acid chain; its full sequence is Sucrose-phosphate synthase 4 (1050 aa).

The tract at residues 134–167 (QGRNDAEEDLLSELSEGEKDKNDGEKEKSEVVTT) is disordered. S148 bears the Phosphoserine mark. Basic and acidic residues predominate over residues 149–163 (EGEKDKNDGEKEKSE). Residue S180 is modified to Phosphoserine.

This sequence belongs to the glycosyltransferase 1 family. Homodimer or homotetramer.

The enzyme catalyses beta-D-fructose 6-phosphate + UDP-alpha-D-glucose = sucrose 6(F)-phosphate + UDP + H(+). Its pathway is glycan biosynthesis; sucrose biosynthesis; sucrose from D-fructose 6-phosphate and UDP-alpha-D-glucose: step 1/2. Activity is regulated by phosphorylation and moderated by concentration of metabolites and light. Its function is as follows. Plays a role in photosynthetic sucrose synthesis by catalyzing the rate-limiting step of sucrose biosynthesis from UDP-glucose and fructose- 6-phosphate. Involved in the regulation of carbon partitioning in the leaves of plants. May regulate the synthesis of sucrose and therefore play a major role as a limiting factor in the export of photoassimilates out of the leaf. Plays a role for sucrose availability that is essential for plant growth and fiber elongation. In Arabidopsis thaliana (Mouse-ear cress), this protein is Sucrose-phosphate synthase 4.